Reading from the N-terminus, the 285-residue chain is Ribosomal RNA small subunit methyltransferase A (285 aa).

S-adenosyl-L-methionine contacts are provided by N30, L32, G57, E78, D101, and N121.

The protein belongs to the class I-like SAM-binding methyltransferase superfamily. rRNA adenine N(6)-methyltransferase family. RsmA subfamily.

It localises to the cytoplasm. The catalysed reaction is adenosine(1518)/adenosine(1519) in 16S rRNA + 4 S-adenosyl-L-methionine = N(6)-dimethyladenosine(1518)/N(6)-dimethyladenosine(1519) in 16S rRNA + 4 S-adenosyl-L-homocysteine + 4 H(+). In terms of biological role, specifically dimethylates two adjacent adenosines (A1518 and A1519) in the loop of a conserved hairpin near the 3'-end of 16S rRNA in the 30S particle. May play a critical role in biogenesis of 30S subunits. This chain is Ribosomal RNA small subunit methyltransferase A, found in Treponema pallidum (strain Nichols).